Consider the following 262-residue polypeptide: Bacteriorhodopsin (262 aa).

Residues M1–S13 constitute a propeptide that is removed on maturation. A Pyrrolidone carboxylic acid modification is found at Q14. Residues Q14–E22 lie on the Extracellular side of the membrane. The chain crosses the membrane as a helical span at residues W23–V42. Residues K43–Y56 lie on the Cytoplasmic side of the membrane. Residues A57–L75 form a helical membrane-spanning segment. The Extracellular portion of the chain corresponds to G76–Y92. The chain crosses the membrane as a helical span at residues W93 to D109. The Cytoplasmic portion of the chain corresponds to L110–T120. The helical transmembrane segment at I121–L140 threads the bilayer. The Extracellular segment spans residues T141–R147. The helical transmembrane segment at F148–F167 threads the bilayer. The Cytoplasmic portion of the chain corresponds to G168–K185. Residues V186–I204 traverse the membrane as a helical segment. At G205–I216 the chain is on the extracellular side. Residues E217–L236 traverse the membrane as a helical segment. Residue K229 is modified to N6-(retinylidene)lysine. Residues L237–D262 are Cytoplasmic-facing.

Homotrimer. The covalent binding of retinal to the apoprotein, bacterioopsin, generates bacteriorhodopsin.

The protein localises to the cell membrane. Its function is as follows. Light-driven proton pump. The polypeptide is Bacteriorhodopsin (bop) (Halobacterium salinarum (strain ATCC 700922 / JCM 11081 / NRC-1) (Halobacterium halobium)).